The primary structure comprises 706 residues: Glycine--tRNA ligase beta subunit (706 aa).

Belongs to the class-II aminoacyl-tRNA synthetase family. In terms of assembly, tetramer of two alpha and two beta subunits.

The protein resides in the cytoplasm. The catalysed reaction is tRNA(Gly) + glycine + ATP = glycyl-tRNA(Gly) + AMP + diphosphate. The protein is Glycine--tRNA ligase beta subunit of Acidobacterium capsulatum (strain ATCC 51196 / DSM 11244 / BCRC 80197 / JCM 7670 / NBRC 15755 / NCIMB 13165 / 161).